The sequence spans 276 residues: uncharacterized protein (276 aa).

The region spanning 20 to 137 (PVLIFIPGAN…PPINTFLPDS (118 aa)) is the AB hydrolase-1 domain. The tract at residues 57–76 (GESELTEPLPDSASNPDSDY) is disordered.

The protein belongs to the AB hydrolase superfamily.

This is an uncharacterized protein from Staphylococcus aureus (strain bovine RF122 / ET3-1).